Consider the following 209-residue polypeptide: Pyroglutamyl-peptidase 1 (209 aa).

Residues Glu-85, Cys-149, and His-168 contribute to the active site.

It belongs to the peptidase C15 family. In terms of assembly, monomer.

The protein resides in the cytoplasm. The catalysed reaction is Release of an N-terminal pyroglutamyl group from a polypeptide, the second amino acid generally not being Pro.. Functionally, removes 5-oxoproline from various penultimate amino acid residues except L-proline. This is Pyroglutamyl-peptidase 1 (Pgpep1) from Rattus norvegicus (Rat).